Consider the following 728-residue polypeptide: Pre-mRNA-splicing ATP-dependent RNA helicase prp-28 (728 aa).

Residues 19–155 (KKEEEAAAAK…NDEAELRARY (137 aa)) form a disordered region. Basic and acidic residues-rich tracts occupy residues 33 to 59 (PKKE…EEAK), 109 to 125 (RDYR…DRNQ), and 137 to 153 (EEKR…ELRA). Positions 293–321 (RSWEESTLPRRLLDIVKNVGYDEPTPIQR) match the Q motif motif. A Helicase ATP-binding domain is found at 324–527 (IPIALQARDL…KKYLRRPAIV (204 aa)). Residue 337-344 (AVTGSGKT) coordinates ATP. A DEAD box motif is present at residues 450–453 (DEAD). The region spanning 538-701 (TVEQRVEFVS…KVPDELRRHE (164 aa)) is the Helicase C-terminal domain. Residues 692-728 (KVPDELRRHEAAQNKPQKGQKKLEESNGYSGKGGSWN) form a disordered region. Basic and acidic residues predominate over residues 693-703 (VPDELRRHEAA).

This sequence belongs to the DEAD box helicase family. DDX23/PRP28 subfamily. Component of the U5 snRNP complex.

The protein localises to the cytoplasm. It localises to the nucleus. The enzyme catalyses ATP + H2O = ADP + phosphate + H(+). Functionally, ATP-dependent RNA helicase involved in mRNA splicing. May destabilize the U1/5'-splice site duplex to permit an effective competition for the 5'-splice site by the U6 snRNA, resulting in the switch between U1 and U6 at the 5'-splice site. May also act to unwind the U4/U6 base-pairing interaction in the U4/U6/U5 snRNP, facilitating the first covalent step of splicing. The chain is Pre-mRNA-splicing ATP-dependent RNA helicase prp-28 (prp-28) from Neurospora crassa (strain ATCC 24698 / 74-OR23-1A / CBS 708.71 / DSM 1257 / FGSC 987).